The sequence spans 239 residues: Ribonuclease HII (239 aa).

The region spanning 30–221 (GPVAGVDEVG…VRRVANGSGG (192 aa)) is the RNase H type-2 domain. Positions 36, 37, and 130 each coordinate a divalent metal cation.

It belongs to the RNase HII family. Mn(2+) serves as cofactor. It depends on Mg(2+) as a cofactor.

It localises to the cytoplasm. It carries out the reaction Endonucleolytic cleavage to 5'-phosphomonoester.. Functionally, endonuclease that specifically degrades the RNA of RNA-DNA hybrids. This chain is Ribonuclease HII, found in Mycolicibacterium paratuberculosis (strain ATCC BAA-968 / K-10) (Mycobacterium paratuberculosis).